The chain runs to 271 residues: Putative phosphoenolpyruvate synthase regulatory protein (271 aa).

151–158 (GVSRSGKT) serves as a coordination point for ADP.

It belongs to the pyruvate, phosphate/water dikinase regulatory protein family. PSRP subfamily.

It carries out the reaction [pyruvate, water dikinase] + ADP = [pyruvate, water dikinase]-phosphate + AMP + H(+). The catalysed reaction is [pyruvate, water dikinase]-phosphate + phosphate + H(+) = [pyruvate, water dikinase] + diphosphate. In terms of biological role, bifunctional serine/threonine kinase and phosphorylase involved in the regulation of the phosphoenolpyruvate synthase (PEPS) by catalyzing its phosphorylation/dephosphorylation. In Burkholderia vietnamiensis (strain G4 / LMG 22486) (Burkholderia cepacia (strain R1808)), this protein is Putative phosphoenolpyruvate synthase regulatory protein.